A 208-amino-acid polypeptide reads, in one-letter code: Transmembrane protein 160 (208 aa).

The transit peptide at 1–45 directs the protein to the mitochondrion; sequence MASIRWLMGSRLSRFVCPFAQLVRQPVLRYVRPPVRALHRGSVRR. 3 helical membrane passes run 82–102, 110–130, and 147–167; these read GFLS…IAFV, AGYA…ASYV, and VLLH…AVSL. Acidic residues predominate over residues 181-192; sequence DDEEHGADESSE. Residues 181 to 208 are disordered; that stretch reads DDEEHGADESSECAECRARRDREKGQDK. Residues 194-208 are compositionally biased toward basic and acidic residues; the sequence is AECRARRDREKGQDK.

The protein belongs to the TMEM160 family.

Its subcellular location is the mitochondrion inner membrane. The sequence is that of Transmembrane protein 160 from Danio rerio (Zebrafish).